We begin with the raw amino-acid sequence, 476 residues long: Fatty acid hydroperoxide lyase, chloroplastic (476 aa).

Residues 280-300 form a helical membrane-spanning segment; that stretch reads LLFILGFNAFGGFSIFLPTLL. Cys438 contributes to the heme binding site.

Belongs to the cytochrome P450 family. It depends on heme as a cofactor. As to expression, highly expressed in developing flowers and in young leaves. Detected in stems and immature green fruits, but not in mature green and red fruits.

The protein localises to the plastid. It localises to the chloroplast outer membrane. Reversibly inhibited by nordihydroguaiaretic acid (NDGA) and irreversibly by salicylic acid. Functionally, cytochrome P450 of the CYP74B subfamily involved in the biosynthesis of traumatin and C6 aldehydes. Metabolizes 13- but not 9-hydroperoxides of linoleic and linolenic acids. Can use 15S-hydroperoxy-11(Z),13(E),17(Z)-eicosatrienoic acid (15-HPET) and 13S-hydroperoxy-9(Z),11(E),15(Z)-octadecatrienoic acid (13-HPOT) as substrates, but only 5% activity with 13S-hydroperoxy-9(Z),11(E)-octadecadienoic acid (13-HPOD). Produces n-hexanal and 12-oxo-9(Z)-dodecanoic acid from 13-HPOD. This chain is Fatty acid hydroperoxide lyase, chloroplastic, found in Solanum lycopersicum (Tomato).